The chain runs to 762 residues: Pyrophosphate-energized vacuolar membrane proton pump (762 aa).

Topologically, residues 1–6 are intravacuolar; it reads MAILGE. The helical transmembrane segment at 7–33 threads the bilayer; it reads LGTEILIPVCGVIGIVFAVAQWFIVSK. At 34–81 the chain is on the cytoplasmic side; sequence VKVTPGAASAAAGAKNGYGDYLIEEEEGLNDHNVVVKCAEIQTAISEG. The helical transmembrane segment at 82–111 threads the bilayer; sequence ATSFLFTMYQYVGMFMVVFAAIIFLFLGSI. Over 112 to 131 the chain is Intravacuolar; the sequence is EGFSTKGQPCTYSKGTCKPA. Cys121 and Cys128 form a disulfide bridge. Residues 132 to 159 form a helical membrane-spanning segment; sequence LYTALFSTASFLLGAITSLVSGFLGMKI. Residues 160–182 are Cytoplasmic-facing; the sequence is ATYANARTTLEARKGVGKAFITA. A helical membrane pass occupies residues 183–212; it reads FRSGAVMGFLLSSSGLVVLYITINVFKMYY. Topologically, residues 213–215 are intravacuolar; it reads GDD. Residues 216–244 form a helical membrane-spanning segment; it reads WEGLFESITGYGLGGSSMALFGRVGGGIY. At 245–282 the chain is on the cytoplasmic side; that stretch reads TKAADVGADLVGKVERNIPEDDPRNPAVIADNVGDNVG. Lys246 contributes to the substrate binding site. Mg(2+) contacts are provided by Asp249, Asp253, and Asp279. A helical membrane pass occupies residues 283–308; sequence DIAGMGSDLFGSYAESSCAALVVASI. Residues 309-316 lie on the Intravacuolar side of the membrane; sequence SSFGINHD. The helical transmembrane segment at 317-342 threads the bilayer; sequence FTAMCYPLLVSSVGIIVCLLTTLFAT. Over 343 to 350 the chain is Cytoplasmic; it reads DFFEIKAA. The helical transmembrane segment at 351–378 threads the bilayer; that stretch reads NEIEPALKKQLIISTALMTVGVAVISWL. Over 379–397 the chain is Intravacuolar; it reads ALPAKFTIFNFGAQKEVSN. Residues 398 to 421 form a helical membrane-spanning segment; it reads WGLFFCVAVGLWAGLIIGFVTEYY. Residues 422 to 443 are Cytoplasmic-facing; that stretch reads TSNAYSPVQDVADSCRTGAATN. Residues 444–468 form a helical membrane-spanning segment; that stretch reads VIFGLALGYKSVIIPIFAIAVSIYV. Over 469–474 the chain is Intravacuolar; it reads SFSIAA. A helical membrane pass occupies residues 475–501; sequence MYGIAMAALGMLSTMATGLAIDAYGPI. Topologically, residues 502–530 are cytoplasmic; sequence SDNAGGIAEMAGMSHRIRERTDALDAAGN. Mg(2+)-binding residues include Asp503 and Asn530. A helical membrane pass occupies residues 531 to 559; that stretch reads TTAAIGKGFAIGSAALVSLALFGAFVSRA. The Intravacuolar segment spans residues 560 to 569; that stretch reads GVKVVDVLSP. A helical membrane pass occupies residues 570 to 598; that stretch reads KVFIGLIVGAMLPYWFSAMTMKSVGSAAL. At 599–627 the chain is on the cytoplasmic side; the sequence is KMVEEVRRQFNTIPGLMEGTAKPDYATCV. The helical transmembrane segment at 628-656 threads the bilayer; that stretch reads KISTDASIKEMIPPGALVMLTPLIVGTLF. Residue Gly657 is a topological domain, intravacuolar. The helical transmembrane segment at 658–685 threads the bilayer; sequence VETLSGVLAGALVSGVQIAISASNTGGA. Residues 686-728 are Cytoplasmic-facing; sequence WDNAKKYIEAGNSEHARSLGPKGSDCHKAAVIGDTIGDPLKDT. The Mg(2+) site is built by Asp687 and Asp723. Lys726 contacts substrate. The helical transmembrane segment at 729–754 threads the bilayer; sequence SGPSLNILIKLMAVESLVFAPFFATY. The Intravacuolar portion of the chain corresponds to 755–762; it reads GGLLFKYI.

Belongs to the H(+)-translocating pyrophosphatase (TC 3.A.10) family. K(+)-stimulated subfamily. In terms of assembly, monomer.

The protein localises to the vacuole membrane. The enzyme catalyses diphosphate + H2O + H(+)(in) = 2 phosphate + 2 H(+)(out). In terms of biological role, contributes to the transtonoplast (from cytosol to vacuole lumen) H(+)-electrochemical potential difference. It establishes a proton gradient of similar and often greater magnitude than the H(+)-ATPase on the same membrane. The chain is Pyrophosphate-energized vacuolar membrane proton pump from Hordeum vulgare (Barley).